A 186-amino-acid chain; its full sequence is Casparian strip membrane protein 1 (186 aa).

At 1–26 the chain is on the cytoplasmic side; sequence MKSSPAELISEAKSSTQNSKMKRAVS. The helical transmembrane segment at 27 to 47 threads the bilayer; that stretch reads VLDFILRLIAVVATLASAIAM. The Extracellular portion of the chain corresponds to 48–74; sequence GTTDESLPFFTQFIRFRAEYDDLPTLR. The helical transmembrane segment at 75–95 threads the bilayer; that stretch reads LFVVASAFASGYLILSLPLSI. Residues 96-107 are Cytoplasmic-facing; that stretch reads LHITRSSARRTR. The helical transmembrane segment at 108–128 threads the bilayer; that stretch reads VILIILDMVMLTSLTAASSAA. Topologically, residues 129–161 are extracellular; it reads AAIVYLAHKGNAKANWFAFCQQYDSFCERISGS. The helical transmembrane segment at 162–182 threads the bilayer; the sequence is LIGSFIAIPLFIMLILFSALV. The Cytoplasmic portion of the chain corresponds to 183 to 186; the sequence is LSKR.

It belongs to the Casparian strip membrane proteins (CASP) family. As to quaternary structure, homodimer and heterodimers.

It localises to the cell membrane. In terms of biological role, regulates membrane-cell wall junctions and localized cell wall deposition. Required for establishment of the Casparian strip membrane domain (CSD) and the subsequent formation of Casparian strips, a cell wall modification of the root endodermis that determines an apoplastic barrier between the intraorganismal apoplasm and the extraorganismal apoplasm and prevents lateral diffusion. This is Casparian strip membrane protein 1 from Lotus japonicus (Lotus corniculatus var. japonicus).